Reading from the N-terminus, the 343-residue chain is Flavonoid 3'-O-methyltransferase FOMT (343 aa).

S-adenosyl-L-homocysteine is bound by residues glycine 184, aspartate 207, aspartate 227, methionine 228, methionine 240, and lysine 241. Catalysis depends on histidine 245, which acts as the Proton acceptor. Active-site residues include glutamate 273 and glutamate 305.

It belongs to the class I-like SAM-binding methyltransferase superfamily. Cation-independent O-methyltransferase family. As to quaternary structure, homodimer.

It catalyses the reaction 3',5-dihydroxy-3,4',7-trimethoxyflavone + S-adenosyl-L-methionine = 5-hydroxy-3,7,3',4'-tetramethoxyflavone + S-adenosyl-L-homocysteine + H(+). The protein operates within flavonoid metabolism. Inhibited by nickel (NiCl(2) and NiSO(4)) and para-chloromercuribenzoate. Its function is as follows. Catalyzes the 3'- or 5'-O-methylation of partially methylated flavonols, but does not accept quercetin or caffeate as substrates for methylation. The sequence is that of Flavonoid 3'-O-methyltransferase FOMT from Chrysosplenium americanum (American golden saxifrage).